A 185-amino-acid polypeptide reads, in one-letter code: Ribosome-recycling factor (185 aa).

Belongs to the RRF family.

It localises to the cytoplasm. In terms of biological role, responsible for the release of ribosomes from messenger RNA at the termination of protein biosynthesis. May increase the efficiency of translation by recycling ribosomes from one round of translation to another. The protein is Ribosome-recycling factor of Mycobacterium leprae (strain Br4923).